The primary structure comprises 426 residues: Synaptotagmin-13 (426 aa).

Residues 1 to 6 (MVLSVP) are Vesicular-facing. A helical transmembrane segment spans residues 7 to 29 (VIALGATLGTATSILALCGVTCL). At 30–426 (CRHMHPKKGL…QIAMWHQLHL (397 aa)) the chain is on the cytoplasmic side. 2 consecutive C2 domains span residues 158–275 (QAPK…AQWG) and 287–422 (GAGE…AMWH).

The protein belongs to the synaptotagmin family. Interacts with NRXN1. As to expression, expressed in brain, pancreas and kidney.

It is found in the membrane. In terms of biological role, may be involved in transport vesicle docking to the plasma membrane. This Homo sapiens (Human) protein is Synaptotagmin-13 (SYT13).